Here is a 112-residue protein sequence, read N- to C-terminus: Notch-regulated ankyrin repeat-containing protein A (112 aa).

ANK repeat units follow at residues 48 to 77 (EGQTALHQSVIDGNLELVKLLVKFGADIRL) and 81 to 110 (EGWSALHIAAFGGHQDIVLYLITKAKYSSG).

It belongs to the NRARP family.

Functionally, regulates independently canonical Wnt and Notch signaling by modulating LEF1 and Notch protein turnover. Stabilizes LEF1, a pivotal transcription factor in the Wnt signaling cascade, by blocking its ubiquitination. Involved in angiogenesis; involved in intersegmental vessel patterning during development. This is Notch-regulated ankyrin repeat-containing protein A (nrarpa) from Danio rerio (Zebrafish).